A 347-amino-acid polypeptide reads, in one-letter code: NADH-ubiquinone oxidoreductase chain 2 (347 aa).

The next 11 helical transmembrane spans lie at 1 to 21 (MNPL…LITA), 25 to 45 (HWFL…PVLT), 55 to 75 (AAIK…MAIL), 96 to 116 (TMML…FWVP), 123 to 143 (TLMS…SIMY), 145 to 165 (IFPV…IMVG), 178 to 198 (ILAY…PYNP), 200 to 220 (ITIF…LALN), 237 to 257 (LTWL…LPPL), 274 to 294 (GTLI…YFYM), and 324 to 344 (FLLP…PLTF).

It belongs to the complex I subunit 2 family. Core subunit of respiratory chain NADH dehydrogenase (Complex I) which is composed of 45 different subunits. Interacts with TMEM242.

It localises to the mitochondrion inner membrane. The catalysed reaction is a ubiquinone + NADH + 5 H(+)(in) = a ubiquinol + NAD(+) + 4 H(+)(out). Functionally, core subunit of the mitochondrial membrane respiratory chain NADH dehydrogenase (Complex I) which catalyzes electron transfer from NADH through the respiratory chain, using ubiquinone as an electron acceptor. Essential for the catalytic activity and assembly of complex I. The chain is NADH-ubiquinone oxidoreductase chain 2 from Hylobates lar (Lar gibbon).